The sequence spans 237 residues: Fluoroquinolones export permease protein MT2761 (237 aa).

The next 6 helical transmembrane spans lie at 20–40 (FLHAAVFSGLIWLAVLLPMPV), 49–69 (YVLVGDIAIIGFFFVGGTVFF), 96–116 (VLLAISLFVAVVVATIVHGLG), 119–139 (LLPLVAGIVLGTLLMLLVGFS), 147–167 (VTDWFLAAVIPLAIMLAPPVV), and 199–219 (LAPWQVGYAVVYPIVCAAGLC).

As to quaternary structure, the complex is composed of 2 ATP-binding proteins and 2 transmembrane proteins.

Its subcellular location is the cell membrane. Its function is as follows. Part of the ABC transporter complex involved in fluoroquinolones export. Probably responsible for the translocation of the substrate across the membrane. This Mycobacterium tuberculosis (strain CDC 1551 / Oshkosh) protein is Fluoroquinolones export permease protein MT2761.